Reading from the N-terminus, the 650-residue chain is Chaperone protein DnaK (650 aa).

Position 200 is a phosphothreonine; by autocatalysis (Thr200).

Belongs to the heat shock protein 70 family.

In terms of biological role, acts as a chaperone. This Burkholderia orbicola (strain MC0-3) protein is Chaperone protein DnaK.